The following is a 459-amino-acid chain: Vacuolar fusion protein CCZ1 homolog (459 aa).

This sequence belongs to the CCZ1 family.

In Nematostella vectensis (Starlet sea anemone), this protein is Vacuolar fusion protein CCZ1 homolog.